The chain runs to 155 residues: SsrA-binding protein (155 aa).

Belongs to the SmpB family.

Its subcellular location is the cytoplasm. In terms of biological role, required for rescue of stalled ribosomes mediated by trans-translation. Binds to transfer-messenger RNA (tmRNA), required for stable association of tmRNA with ribosomes. tmRNA and SmpB together mimic tRNA shape, replacing the anticodon stem-loop with SmpB. tmRNA is encoded by the ssrA gene; the 2 termini fold to resemble tRNA(Ala) and it encodes a 'tag peptide', a short internal open reading frame. During trans-translation Ala-aminoacylated tmRNA acts like a tRNA, entering the A-site of stalled ribosomes, displacing the stalled mRNA. The ribosome then switches to translate the ORF on the tmRNA; the nascent peptide is terminated with the 'tag peptide' encoded by the tmRNA and targeted for degradation. The ribosome is freed to recommence translation, which seems to be the essential function of trans-translation. In Bacillus mycoides (strain KBAB4) (Bacillus weihenstephanensis), this protein is SsrA-binding protein.